Here is a 991-residue protein sequence, read N- to C-terminus: UPF0182 protein RHA1_ro08670 (991 aa).

Helical transmembrane passes span 16 to 36, 61 to 81, 115 to 135, 170 to 190, 214 to 234, 263 to 283, and 291 to 311; these read VMIM…RLVV, LILF…AVVW, FTVG…QASW, LILA…LGTH, VQLA…YWLD, RLIM…AIAV, and MATA…PALI. The interval 902-940 is disordered; it reads TGAVATAPGGDATTPPPTGGQPPAPPPPGAPPAPPPATS. Positions 903 to 914 are enriched in low complexity; it reads GAVATAPGGDAT. Residues 915–938 are compositionally biased toward pro residues; that stretch reads TPPPTGGQPPAPPPPGAPPAPPPA.

It belongs to the UPF0182 family.

Its subcellular location is the cell membrane. The chain is UPF0182 protein RHA1_ro08670 from Rhodococcus jostii (strain RHA1).